Reading from the N-terminus, the 244-residue chain is Ureidoacrylate amidohydrolase RutB (244 aa).

Asp38 serves as the catalytic Proton acceptor. Lys147 is an active-site residue. The Nucleophile role is filled by Cys180.

Belongs to the isochorismatase family. RutB subfamily.

It carries out the reaction (Z)-3-ureidoacrylate + H2O + H(+) = (Z)-3-aminoacrylate + NH4(+) + CO2. It catalyses the reaction (Z)-3-ureidoacrylate + H2O = (Z)-3-aminoacrylate + carbamate + H(+). The enzyme catalyses (Z)-2-methylureidoacrylate + H2O + H(+) = (Z)-2-methylaminoacrylate + NH4(+) + CO2. Functionally, hydrolyzes ureidoacrylate to form aminoacrylate and carbamate. The carbamate hydrolyzes spontaneously, thereby releasing one of the nitrogen atoms of the pyrimidine ring as ammonia and one of its carbon atoms as CO2. The polypeptide is Ureidoacrylate amidohydrolase RutB (Shigella sonnei (strain Ss046)).